We begin with the raw amino-acid sequence, 241 residues long: Orotidine 5'-phosphate decarboxylase (241 aa).

Substrate contacts are provided by residues D15, K37, 64-73 (DLKYHDIPNT), T126, R187, Q196, G216, and R217. The active-site Proton donor is K66.

The protein belongs to the OMP decarboxylase family. Type 1 subfamily. Homodimer.

It carries out the reaction orotidine 5'-phosphate + H(+) = UMP + CO2. The protein operates within pyrimidine metabolism; UMP biosynthesis via de novo pathway; UMP from orotate: step 2/2. Functionally, catalyzes the decarboxylation of orotidine 5'-monophosphate (OMP) to uridine 5'-monophosphate (UMP). The polypeptide is Orotidine 5'-phosphate decarboxylase (Geotalea uraniireducens (strain Rf4) (Geobacter uraniireducens)).